Consider the following 100-residue polypeptide: Class II hydrophobin CU (100 aa).

The first 25 residues, 1 to 25 (MQFSIATIALFLSSAMAAPYSGNSN), serve as a signal peptide directing secretion. Cystine bridges form between Cys-32–Cys-82, Cys-42–Cys-72, Cys-43–Cys-55, and Cys-83–Cys-94.

This sequence belongs to the cerato-ulmin hydrophobin family. As to quaternary structure, homotetramer. Further self-assembles to form highly ordered films at water-air interfaces through intermolecular interactions.

The protein resides in the secreted. The protein localises to the cell wall. Its function is as follows. Aerial growth, conidiation, and dispersal of filamentous fungi in the environment rely upon a capability of their secreting small amphipathic proteins called hydrophobins (HPBs) with low sequence identity. Class I can self-assemble into an outermost layer of rodlet bundles on aerial cell surfaces, conferring cellular hydrophobicity that supports fungal growth, development and dispersal; whereas Class II form highly ordered films at water-air interfaces through intermolecular interactions but contribute nothing to the rodlet structure. CU is a class II hydrophobin that is implicated in the pathogenicity of this fungus on elm trees. Required for hydrophobicity and adherence of the cells and acts as a parasitic fitness factor by protecting infectious propagules from desiccation. Reduces the interfacial tension of both oil-water and air-water interfaces. This is Class II hydrophobin CU from Ophiostoma ulmi (Dutch elm disease fungus).